The chain runs to 65 residues: Gallinacin-12 (65 aa).

Residues M1–T19 form the signal peptide. Disulfide bonds link C25–C54, C32–C47, and C37–C55.

Belongs to the beta-defensin family. As to expression, expressed in the large intestine, kidney liver, gall bladder, testis, ovary and male and female reproductive tracts. Expressed in the ovarian stroma and the theca and granulosa layers of the ovarian follicle.

The protein localises to the secreted. Its subcellular location is the cytoplasmic granule. In terms of biological role, has bactericidal activity. The polypeptide is Gallinacin-12 (GAL12) (Gallus gallus (Chicken)).